A 259-amino-acid polypeptide reads, in one-letter code: Apolipoprotein A-I (259 aa).

The N-terminal stretch at 1–18 (MKAAVLAVALVFLTGCQA) is a signal peptide. A run of 2 repeats spans residues 67 to 88 (LNLL…EQLG) and 89 to 110 (PVTQ…NEMN). The interval 67–259 (LNLLDNWDTL…IDEAKKKLNA (193 aa)) is 10 X approximate tandem repeats. A Methionine sulfoxide modification is found at Met-109. Residues 111-121 (KDLENVKQKMQ) form a 3; half-length repeat. Repeat unit 4 spans residues 122–143 (PHLDEFQEKWNEEVEAYRQKLE). The 5; truncated repeat unit spans residues 144-161 (PLGTELHKNAKEMQRHLK). Residues 162–183 (VVAEEFRDRMRVNADALRAKFG) form repeat 6. The 7; truncated repeat unit spans residues 184–203 (LYSDQMRENLAQRLTEIKNH). Residue Met-189 is modified to Methionine sulfoxide. Repeat unit 8 spans residues 204-225 (PTLIEYHTKASDHLKTLGEKAK). One copy of the 9; half-length repeat lies at 226 to 236 (PALDDLGQGLM). A Methionine sulfoxide modification is found at Met-236. Repeat 10 spans residues 237–259 (PVLEAWKAKIMSMIDEAKKKLNA).

The protein belongs to the apolipoprotein A1/A4/E family. As to quaternary structure, homodimer. Interacts with APOA1BP and CLU. Component of a sperm activating protein complex (SPAP), consisting of APOA1, an immunoglobulin heavy chain, an immunoglobulin light chain and albumin. Interacts with NDRG1. Interacts with SCGB3A2. Interacts with NAXE and YJEFN3. Post-translationally, glycosylated. In terms of processing, palmitoylated. Phosphorylation sites are present in the extracellular medium. In terms of tissue distribution, major protein of plasma HDL, also found in chylomicrons.

The protein resides in the secreted. Participates in the reverse transport of cholesterol from tissues to the liver for excretion by promoting cholesterol efflux from tissues and by acting as a cofactor for the lecithin cholesterol acyltransferase (LCAT). As part of the SPAP complex, activates spermatozoa motility. The polypeptide is Apolipoprotein A-I (Apoa1) (Rattus norvegicus (Rat)).